The chain runs to 353 residues: Photosystem II protein D1 (353 aa).

Position 2 is an N-acetylthreonine (threonine 2). The residue at position 2 (threonine 2) is a Phosphothreonine. Helical transmembrane passes span 29-46 (YIGWFGVLMIPTLLTATS), 118-133 (HFLLGVACYMGREWEL), and 142-156 (WIAVAYSAPVAAATA). Chlorophyll a is bound at residue histidine 118. Tyrosine 126 contacts pheophytin a. [CaMn4O5] cluster-binding residues include aspartate 170 and glutamate 189. A helical membrane pass occupies residues 197 to 218 (FHMLGVAGVFGGSLFSAMHGSL). Histidine 198 provides a ligand contact to chlorophyll a. A quinone-binding positions include histidine 215 and 264 to 265 (SF). Histidine 215 lines the Fe cation pocket. Histidine 272 contributes to the Fe cation binding site. A helical transmembrane segment spans residues 274 to 288 (FLAAWPVVGIWFTAL). [CaMn4O5] cluster-binding residues include histidine 332, glutamate 333, aspartate 342, and alanine 344. A propeptide spanning residues 345 to 353 (SVELDSIDG) is cleaved from the precursor.

The protein belongs to the reaction center PufL/M/PsbA/D family. PSII is composed of 1 copy each of membrane proteins PsbA, PsbB, PsbC, PsbD, PsbE, PsbF, PsbH, PsbI, PsbJ, PsbK, PsbL, PsbM, PsbT, PsbX, PsbY, PsbZ, Psb30/Ycf12, at least 3 peripheral proteins of the oxygen-evolving complex and a large number of cofactors. It forms dimeric complexes. Requires The D1/D2 heterodimer binds P680, chlorophylls that are the primary electron donor of PSII, and subsequent electron acceptors. It shares a non-heme iron and each subunit binds pheophytin, quinone, additional chlorophylls, carotenoids and lipids. D1 provides most of the ligands for the Mn4-Ca-O5 cluster of the oxygen-evolving complex (OEC). There is also a Cl(-1) ion associated with D1 and D2, which is required for oxygen evolution. The PSII complex binds additional chlorophylls, carotenoids and specific lipids. as cofactor. Tyr-161 forms a radical intermediate that is referred to as redox-active TyrZ, YZ or Y-Z. In terms of processing, C-terminally processed by CTPA; processing is essential to allow assembly of the oxygen-evolving complex and thus photosynthetic growth.

It is found in the plastid. It localises to the chloroplast thylakoid membrane. The enzyme catalyses 2 a plastoquinone + 4 hnu + 2 H2O = 2 a plastoquinol + O2. Its function is as follows. Photosystem II (PSII) is a light-driven water:plastoquinone oxidoreductase that uses light energy to abstract electrons from H(2)O, generating O(2) and a proton gradient subsequently used for ATP formation. It consists of a core antenna complex that captures photons, and an electron transfer chain that converts photonic excitation into a charge separation. The D1/D2 (PsbA/PsbD) reaction center heterodimer binds P680, the primary electron donor of PSII as well as several subsequent electron acceptors. This is Photosystem II protein D1 from Gnetum parvifolium (Small-leaved jointfir).